Consider the following 656-residue polypeptide: Ribosome quality control complex subunit 1 (656 aa).

Residues 1 to 11 (MSSRALRKLQR) are compositionally biased toward basic residues. Disordered stretches follow at residues 1–35 (MSSR…FSST), 51–122 (NNAI…LESS), and 634–656 (LFTS…GQGD). The span at 17-32 (LLEEALDSESDEDDEF) shows a compositional bias: acidic residues. A compositionally biased stretch (basic and acidic residues) spans 51–63 (NNAINSEAEKSVS). A phosphoserine mark is found at Ser56, Ser61, and Ser63. The span at 83–101 (KKAKNKKKKKKQQKKKKVT) shows a compositional bias: basic residues. The span at 102 to 122 (GKRDLDNQSSDNEKLEGLESS) shows a compositional bias: basic and acidic residues. Phosphoserine occurs at positions 110 and 111.

This sequence belongs to the TCF25 family. As to quaternary structure, component of the ribosome quality control complex (RQC), composed of the E3 ubiquitin ligase rkr1/ltn1, rqc1 and mtr1/rqc2, as well as cdc48 and its ubiquitin-binding cofactors. RQC forms a stable complex with 60S ribosomal subunits.

It is found in the cytoplasm. In terms of biological role, component of the ribosome quality control complex (RQC), a ribosome-associated complex that mediates ubiquitination and extraction of incompletely synthesized nascent chains for proteasomal degradation. Within the RQC complex, rqc1 is essential for the recruitment of cdc48 to incompletely synthesized nascent polypeptides that are ubiquitinated by rkr1/ltn1. The polypeptide is Ribosome quality control complex subunit 1 (Schizosaccharomyces pombe (strain 972 / ATCC 24843) (Fission yeast)).